A 156-amino-acid polypeptide reads, in one-letter code: ATP synthase subunit b (156 aa).

Residues 11 to 31 (AIAFVLFVMFCMKFVWPPIMA) traverse the membrane as a helical segment.

It belongs to the ATPase B chain family. As to quaternary structure, F-type ATPases have 2 components, F(1) - the catalytic core - and F(0) - the membrane proton channel. F(1) has five subunits: alpha(3), beta(3), gamma(1), delta(1), epsilon(1). F(0) has three main subunits: a(1), b(2) and c(10-14). The alpha and beta chains form an alternating ring which encloses part of the gamma chain. F(1) is attached to F(0) by a central stalk formed by the gamma and epsilon chains, while a peripheral stalk is formed by the delta and b chains.

The protein localises to the cell inner membrane. In terms of biological role, f(1)F(0) ATP synthase produces ATP from ADP in the presence of a proton or sodium gradient. F-type ATPases consist of two structural domains, F(1) containing the extramembraneous catalytic core and F(0) containing the membrane proton channel, linked together by a central stalk and a peripheral stalk. During catalysis, ATP synthesis in the catalytic domain of F(1) is coupled via a rotary mechanism of the central stalk subunits to proton translocation. Its function is as follows. Component of the F(0) channel, it forms part of the peripheral stalk, linking F(1) to F(0). The sequence is that of ATP synthase subunit b from Photorhabdus laumondii subsp. laumondii (strain DSM 15139 / CIP 105565 / TT01) (Photorhabdus luminescens subsp. laumondii).